The sequence spans 1047 residues: Protein masquerade (1047 aa).

An N-terminal signal peptide occupies residues 1-30; sequence MPRHSSTMSRLVLPLIFSILLVSKPSPSQA. Positions 54–87 are CLIP 1; that stretch reads KDCPGVCVHTLATLICYEVLDDVACPSPSMKCCI. Cystine bridges form between C56/C85, C60/C78, and C69/C86. N95 carries an N-linked (GlcNAc...) asparagine glycan. Composition is skewed to low complexity over residues 98 to 139 and 148 to 175; these read AVRA…STTP and KRPA…VATA. The interval 98-189 is disordered; that stretch reads AVRATTTPKT…KEEATKADDA (92 aa). Positions 176–189 are enriched in basic and acidic residues; it reads KPKDKEEATKADDA. Residues 192-224 are CLIP 2; that stretch reads DCTGVCVADRIAEYCEAYLTSDGLCKEGTKCCV. 3 cysteine pairs are disulfide-bonded: C193–C222, C197–C216, and C206–C223. Residue N251 is glycosylated (N-linked (GlcNAc...) asparagine). Residues 252–335 form a disordered region; that stretch reads QTLSEKSAPA…PLSNKLKSGQ (84 aa). Positions 263 to 280 are enriched in low complexity; it reads SSSTSTTSTTTTTSTTTT. N287 carries an N-linked (GlcNAc...) asparagine glycan. Acidic residues predominate over residues 307-325; the sequence is AAEEEEEQETEEDGEEEEP. The tract at residues 343–374 is CLIP 3; that stretch reads ECEGECMNGIFAIFCDDIDSDAFCPGEESCCV. Cystine bridges form between C344-C372, C348-C366, and C357-C373. Residues 376–428 are disordered; that stretch reads GGASEATPSSKAPPTKPAIKHAPKPAAKPARPASPPPAPPSSTSGGGGGGDFL. Residues 457–492 are CLIP 4; sequence RCPGFCLLNIMAAFCERPSVLVSTPTTCAKGSVCCD. 3 disulfide bridges follow: C458–C490, C462–C484, and C471–C491. Positions 498–527 are disordered; sequence APKPKLPPPTPSPTASPTAPPYVLPNTPSP. The segment covering 501–527 has biased composition (pro residues); that stretch reads PKLPPPTPSPTASPTAPPYVLPNTPSP. Residues 532–567 form a CLIP 5 region; it reads ECPGSCIVSLLSFTCFKNAEMTDLFRCKRSGQICCA. 3 disulfide bridges follow: C533–C565, C537–C558, and C546–C566. N582 is a glycosylation site (N-linked (GlcNAc...) asparagine). Residues 583–673 form a disordered region; sequence DTAYYPAPPP…TTTTTTTTPR (91 aa). 3 stretches are compositionally biased toward pro residues: residues 588 to 606, 613 to 638, and 650 to 661; these read PAPP…PQTP, NPPP…PPAP, and GLPPQPQPPMTT. Positions 662–672 are enriched in low complexity; that stretch reads PPTTTTTTTTP. 5 disulfides stabilise this stretch: C682/C916, C829/C845, C930/C1001, C961/C981, and C991/C1019. 2 N-linked (GlcNAc...) asparagine glycosylation sites follow: N726 and N794. The interval 803-1043 is peptidase S1; the sequence is VVGGEDGENG…FIGWINQIIS (241 aa).

It belongs to the peptidase S1 family. CLIP subfamily. Proteolytically cleaved and thereafter secreted.

The protein resides in the secreted. The protein localises to the cell projection. It localises to the axon. In embryogenesis, has a role in somatic muscle attachment and in the development of axonal pathways probably by stabilizing cell-matrix adhesion and/or by acting as a competitive antagonist of serine proteases. The chain is Protein masquerade from Drosophila melanogaster (Fruit fly).